The primary structure comprises 87 residues: Small ribosomal subunit protein uS17 (87 aa).

The protein belongs to the universal ribosomal protein uS17 family. In terms of assembly, part of the 30S ribosomal subunit.

In terms of biological role, one of the primary rRNA binding proteins, it binds specifically to the 5'-end of 16S ribosomal RNA. The protein is Small ribosomal subunit protein uS17 of Cytophaga hutchinsonii (strain ATCC 33406 / DSM 1761 / CIP 103989 / NBRC 15051 / NCIMB 9469 / D465).